The sequence spans 742 residues: Synaptic vesicle glycoprotein 2A (742 aa).

An interaction with SYT1 region spans residues 1–57 (MEEGFRDRAAFIRGAKDIAKEVKKHAAKKVVKGLDRVQDEYSRRSYSRFEEEEDDDD). Topologically, residues 1 to 169 (MEEGFRDRAA…GHGRFQWTLY (169 aa)) are cytoplasmic. Residues 40–49 (EYSRRSYSRF) are compositionally biased toward basic and acidic residues. Residues 40–145 (EYSRRSYSRF…RGEAQRRKDR (106 aa)) are disordered. A phosphoserine mark is found at S80 and S81. The residue at position 84 (T84) is a Phosphothreonine. Residues 122-137 (VRGGLSDGEGPPGGRG) are compositionally biased toward gly residues. S127 carries the post-translational modification Phosphoserine. The helical transmembrane segment at 170–190 (FVLGLALMADGVEVFVVGFVL) threads the bilayer. Residues 191–205 (PSAEKDMCLSDSNKG) are Extracellular-facing. A helical transmembrane segment spans residues 206 to 226 (MLGLIVYLGMMVGAFLWGGLA). Over 227-233 (DRLGRRQ) the chain is Cytoplasmic. The chain crosses the membrane as a helical span at residues 234–254 (CLLISLSVNSVFAFFSSFVQG). Residues 255 to 262 (YGTFLFCR) are Extracellular-facing. The helical transmembrane segment at 263–283 (LLSGVGIGGSIPIVFSYFSEF) threads the bilayer. Over 284–294 (LAQEKRGEHLS) the chain is Cytoplasmic. Residues 295–315 (WLCMFWMIGGVYAAAMAWAII) form a helical membrane-spanning segment. Residues 316–334 (PHYGWSFQMGSAYQFHSWR) are Extracellular-facing. The helical transmembrane segment at 335–355 (VFVLVCAFPSVFAIGALTTQP) threads the bilayer. At 356–447 (ESPRFFLENG…CFSPEYRRIT (92 aa)) the chain is on the cytoplasmic side. Phosphoserine is present on S393. A helical membrane pass occupies residues 448 to 468 (LMMMGVWFTMSFSYYGLTVWF). The Extracellular portion of the chain corresponds to 469 to 598 (PDMIRHLQAV…GTGEGAYMVY (130 aa)). Phosphotyrosine is present on Y480. N-linked (GlcNAc...) asparagine glycosylation is found at N498 and N548. An N-linked (GlcNAc...) asparagine; alternate glycan is attached at N573. N573 is a glycosylation site (N-linked (HexNAc...) asparagine; alternate). The chain crosses the membrane as a helical span at residues 599–619 (FVSFLGTLAVLPGNIVSALLM). Topologically, residues 620 to 626 (DKIGRLR) are cytoplasmic. Residues 627-647 (MLAGSSVLSCVSCFFLSFGNS) traverse the membrane as a helical segment. The Extracellular portion of the chain corresponds to 648–651 (ESAM). The helical transmembrane segment at 652–672 (IALLCLFGGVSIASWNALDVL) threads the bilayer. Residues 673 to 685 (TVELYPSDKRTTA) lie on the Cytoplasmic side of the membrane. A helical membrane pass occupies residues 686–708 (FGFLNALCKLAAVLGISIFTSFV). At 709 to 712 (GITK) the chain is on the extracellular side. The chain crosses the membrane as a helical span at residues 713–731 (AAPILFASAALALGSSLAL). Over 732 to 742 (KLPETRGQVLQ) the chain is Cytoplasmic.

The protein belongs to the major facilitator superfamily. Interacts with SYT1/synaptotagmin-1 in a calcium-dependent manner. Binds the adapter protein complex AP-2. As to quaternary structure, (Microbial infection) Interacts with C.botulinum neurotoxin type A1 and type A2 (BoNT/A, botA). Interaction is improved by glycosylation of SV2. In terms of assembly, (Microbial infection) Copurifies with C.botulinum neurotoxin type B (BoNT/B, botB) and synaptotagmin 1 (SYT1). Interaction does not require glycosylation of SV2 or SYT1 proteins. Another group finds only copurification with SYT1 and SYT2. (Microbial infection) Interacts with C.botulinum neurotoxin type E (BoNT/E). Interaction requires glycosylation of SV2 proteins. As to quaternary structure, (Microbial infection) Copurifies with C.botulinum neurotoxin type F (BoNT/F) and synaptotagmin 1 (SYT2). Another group finds only copurification with BoNT/F. Interaction requires SV2 glycosylation. Phosphorylation by CK1 of the N-terminal cytoplasmic domain regulates interaction with SYT1. Post-translationally, N-glycosylated, on at least 3 residues. As to expression, widely expressed throughout the brain (at protein level). Expressed by neural and endocrine cells of brain and spinal cord.

It is found in the presynapse. Its subcellular location is the cytoplasmic vesicle. The protein localises to the secretory vesicle. It localises to the synaptic vesicle membrane. Plays a role in the control of regulated secretion in neural and endocrine cells, enhancing selectively low-frequency neurotransmission. Positively regulates vesicle fusion by maintaining the readily releasable pool of secretory vesicles. Its function is as follows. (Microbial infection) Receptor for C.botulinum neurotoxin type A (BoNT/A, botA); the toxin binds via extracellular loop 4. Restores uptake of BoNT/A in mouse cells that are deleted for SV2 receptor. Glycosylation of Asn-573 is not essential for receptor activity, but enhances uptake. Also serves as a receptor for the closely related C.botulinum neurotoxin type A2; glycosylation is not essential but enhances the interaction. In terms of biological role, possible receptor for C.botulinum neurotoxin type D (BoNT/D, botD); BoNT/D does not bind to extracellular loop 4 as do BoNT/A and BoNT/E, nor to loop 1 or loop 3. Another group does not find a convincing interaction with SV2. Functionally, (Microbial infection) Receptor for C.botulinum neurotoxin type E (BoNT/E); the toxin probably binds via extracellular loop 4 and requires glycosylation of Asn-573. Restores uptake of BoNT/E in mouse cells that are deleted for SV2 receptor. (Microbial infection) Receptor for C.botulinum neurotoxin type F (BoNT/F). Binding requires glycosylation of Asn-573. The polypeptide is Synaptic vesicle glycoprotein 2A (Sv2a) (Rattus norvegicus (Rat)).